We begin with the raw amino-acid sequence, 248 residues long: Probable transcriptional regulatory protein Plav_2114 (248 aa).

It belongs to the TACO1 family.

It is found in the cytoplasm. The chain is Probable transcriptional regulatory protein Plav_2114 from Parvibaculum lavamentivorans (strain DS-1 / DSM 13023 / NCIMB 13966).